The sequence spans 448 residues: uncharacterized protein (448 aa).

Positions 187–198 (SKGDRGDADDRG) are enriched in basic and acidic residues. Disordered stretches follow at residues 187–221 (SKGDRGDADDRGPASVGSGGAPARGAGQQPELPTR), 243–270 (LQVPGGTSAAIPSASSTPSLPNLGGATM), and 291–361 (LSGL…LPNG). The segment covering 243 to 261 (LQVPGGTSAAIPSASSTPS) has biased composition (low complexity). Positions 307-334 (FDERGQEVRDPADYEHSNEPDERRADDR) are enriched in basic and acidic residues.

It to M.tuberculosis Rv0025 and Rv0739.

This is an uncharacterized protein from Mycobacterium tuberculosis (strain ATCC 25618 / H37Rv).